Consider the following 413-residue polypeptide: Coiled-coil domain-containing protein 83 (413 aa).

2 coiled-coil regions span residues 32 to 186 (HCQI…RIIR) and 215 to 255 (IWEN…QLFN).

In Bos taurus (Bovine), this protein is Coiled-coil domain-containing protein 83 (CCDC83).